Consider the following 408-residue polypeptide: MYPMDSDYHRRGLVANDRSPAQFVRLDKPRAVDDLYIGKREKMRRWLCCACHVEEPYHSSENEHLRSPKHHNDFGHHTRKPQAAVKPDALKEPPSIDVPALSLDELKEKTDNFGSKSLIGEGSYGRAYYATLKDGKAVAVKKLDNAAEPESNVEFLTQVSRVSKLKHDNFVELFGYCVEGNFRILAYEFATMGSLHDILHGRKGVQGAQPGPTLDWIQRVRIAVDAARGLEYLHEKVQPAVIHRDIRSSNVLLFEDFKAKIADFNLSNQSPDMAARLHSTRVLGTFGYHAPEYAMTGQLTQKSDVYSFGVVLLELLTGRKPVDHTMPRGQQSLVTWATPRLSEDKVKQCVDPKLKGEYPPKAVAKLAAVAALCVQYESEFRPNMSIVVKALQPLLRSSTAAAVPVQEA.

The segment covering 59–76 (SSENEHLRSPKHHNDFGH) has biased composition (basic and acidic residues). The disordered stretch occupies residues 59 to 91 (SSENEHLRSPKHHNDFGHHTRKPQAAVKPDALK). One can recognise a Protein kinase domain in the interval 113-395 (FGSKSLIGEG…IVVKALQPLL (283 aa)). Residues 119–127 (IGEGSYGRA) and K141 contribute to the ATP site. Residue D245 is the Proton acceptor of the active site.

The protein belongs to the protein kinase superfamily. Tyr protein kinase family. In terms of assembly, interacts with OXI1. In terms of processing, phosphorylated by OXI1.

The protein localises to the cell membrane. It carries out the reaction L-tyrosyl-[protein] + ATP = O-phospho-L-tyrosyl-[protein] + ADP + H(+). The chain is PTI1-like tyrosine-protein kinase 3 (PTI13) from Arabidopsis thaliana (Mouse-ear cress).